A 438-amino-acid polypeptide reads, in one-letter code: UDP-glycosyltransferase 84B2 (438 aa).

UDP-alpha-D-glucose-binding positions include Ser-260, 314–316 (GQQ), 331–339 (HCGWNSTIE), and 353–356 (WIDQ).

It belongs to the UDP-glycosyltransferase family.

The protein is UDP-glycosyltransferase 84B2 (UGT84B2) of Arabidopsis thaliana (Mouse-ear cress).